A 153-amino-acid chain; its full sequence is Aspartate carbamoyltransferase regulatory chain (153 aa).

4 residues coordinate Zn(2+): Cys-109, Cys-114, Cys-138, and Cys-141.

The protein belongs to the PyrI family. As to quaternary structure, contains catalytic and regulatory chains. Zn(2+) is required as a cofactor.

Functionally, involved in allosteric regulation of aspartate carbamoyltransferase. This is Aspartate carbamoyltransferase regulatory chain from Salmonella newport (strain SL254).